The following is a 500-amino-acid chain: Protein O-glucosyltransferase 2 (500 aa).

The N-terminal stretch at 1–22 is a signal peptide; it reads MLRKLLLLLMSCIIFLTRRSKA. The Filamin repeat unit spans residues 23–128; the sequence is AAAASASKTL…LVGKSPYVLR (106 aa). N-linked (GlcNAc...) asparagine glycosylation is found at Asn-60 and Asn-259. The Prevents secretion from ER signature appears at 497–500; that stretch reads RDEL.

Belongs to the KDELC family.

It localises to the endoplasmic reticulum lumen. It catalyses the reaction L-seryl-[EGF-like domain protein] + UDP-alpha-D-glucose = 3-O-(beta-D-glucosyl)-L-seryl-[EGF-like domain protein] + UDP + H(+). The catalysed reaction is L-seryl-[EGF-like domain protein] + UDP-alpha-D-xylose = 3-O-(beta-D-xylosyl)-L-seryl-[EGF-like domain protein] + UDP + H(+). It functions in the pathway protein modification; protein glycosylation. In terms of biological role, protein glucosyltransferase that catalyzes the transfer of glucose from UDP-glucose to a serine residue within the consensus sequence peptide C-X-N-T-X-G-S-F-X-C. Can also catalyze the transfer of xylose from UDP-xylose but less efficiently. The protein is Protein O-glucosyltransferase 2 (poglut2) of Danio rerio (Zebrafish).